The following is a 450-amino-acid chain: Sorting nexin-4 (450 aa).

Methionine 1 bears the N-acetylmethionine mark. The segment at 1–53 (MEQAAPDPERLWQPAPLEPLSHPDAGLESMVGEETKGARDEGPGDGTMTENNF) is disordered. Residues 33–42 (EETKGARDEG) are compositionally biased toward basic and acidic residues. Residues 61 to 187 (SVSEAEKRTG…YLFLTQEGNW (127 aa)) form the PX domain. A 1,2-diacyl-sn-glycero-3-phospho-(1D-myo-inositol-3-phosphate) contacts are provided by arginine 106, serine 108, lysine 132, and arginine 154.

Belongs to the sorting nexin family. In terms of assembly, heterodimer; heterodimerizes with SNX7 or SNX30. Interacts with WWC1/KIBRA. Identified in a complex with WWC1/KIBRA and dynein components DYNLL1 and DYNC1I2. Interacts with BIN1.

Its subcellular location is the early endosome. It is found in the early endosome membrane. In terms of biological role, involved in the regulation of endocytosis and in several stages of intracellular trafficking. Plays a role in recycling endocytosed transferrin receptor and prevent its degradation. Involved in autophagosome assembly by regulating trafficking and recycling of phospholipid scramblase ATG9A. This Bos taurus (Bovine) protein is Sorting nexin-4.